Consider the following 253-residue polypeptide: Probable transcriptional regulatory protein TM_0466 (253 aa).

It belongs to the TACO1 family.

Its subcellular location is the cytoplasm. The sequence is that of Probable transcriptional regulatory protein TM_0466 from Thermotoga maritima (strain ATCC 43589 / DSM 3109 / JCM 10099 / NBRC 100826 / MSB8).